Consider the following 316-residue polypeptide: 4-hydroxy-3-methylbut-2-enyl diphosphate reductase (316 aa).

C12 provides a ligand contact to [4Fe-4S] cluster. Positions 41 and 74 each coordinate (2E)-4-hydroxy-3-methylbut-2-enyl diphosphate. Dimethylallyl diphosphate is bound by residues H41 and H74. Isopentenyl diphosphate is bound by residues H41 and H74. [4Fe-4S] cluster is bound at residue C96. A (2E)-4-hydroxy-3-methylbut-2-enyl diphosphate-binding site is contributed by H124. A dimethylallyl diphosphate-binding site is contributed by H124. H124 is a binding site for isopentenyl diphosphate. E126 serves as the catalytic Proton donor. T167 is a (2E)-4-hydroxy-3-methylbut-2-enyl diphosphate binding site. A [4Fe-4S] cluster-binding site is contributed by C197. Residues S225, S226, N227, and S269 each contribute to the (2E)-4-hydroxy-3-methylbut-2-enyl diphosphate site. Positions 225, 226, 227, and 269 each coordinate dimethylallyl diphosphate. The isopentenyl diphosphate site is built by S225, S226, N227, and S269.

Belongs to the IspH family. Homodimer. It depends on [4Fe-4S] cluster as a cofactor.

It carries out the reaction isopentenyl diphosphate + 2 oxidized [2Fe-2S]-[ferredoxin] + H2O = (2E)-4-hydroxy-3-methylbut-2-enyl diphosphate + 2 reduced [2Fe-2S]-[ferredoxin] + 2 H(+). The catalysed reaction is dimethylallyl diphosphate + 2 oxidized [2Fe-2S]-[ferredoxin] + H2O = (2E)-4-hydroxy-3-methylbut-2-enyl diphosphate + 2 reduced [2Fe-2S]-[ferredoxin] + 2 H(+). It participates in isoprenoid biosynthesis; dimethylallyl diphosphate biosynthesis; dimethylallyl diphosphate from (2E)-4-hydroxy-3-methylbutenyl diphosphate: step 1/1. Its pathway is isoprenoid biosynthesis; isopentenyl diphosphate biosynthesis via DXP pathway; isopentenyl diphosphate from 1-deoxy-D-xylulose 5-phosphate: step 6/6. Catalyzes the conversion of 1-hydroxy-2-methyl-2-(E)-butenyl 4-diphosphate (HMBPP) into a mixture of isopentenyl diphosphate (IPP) and dimethylallyl diphosphate (DMAPP). Acts in the terminal step of the DOXP/MEP pathway for isoprenoid precursor biosynthesis. The chain is 4-hydroxy-3-methylbut-2-enyl diphosphate reductase from Salmonella typhi.